Here is a 129-residue protein sequence, read N- to C-terminus: Transcription antitermination protein NusB (129 aa).

This sequence belongs to the NusB family.

Functionally, involved in transcription antitermination. Required for transcription of ribosomal RNA (rRNA) genes. Binds specifically to the boxA antiterminator sequence of the ribosomal RNA (rrn) operons. This is Transcription antitermination protein NusB from Staphylococcus aureus (strain bovine RF122 / ET3-1).